The chain runs to 511 residues: Bifunctional purine biosynthesis protein PurH (511 aa).

The MGS-like domain occupies M1–V145.

This sequence belongs to the PurH family.

The catalysed reaction is (6R)-10-formyltetrahydrofolate + 5-amino-1-(5-phospho-beta-D-ribosyl)imidazole-4-carboxamide = 5-formamido-1-(5-phospho-D-ribosyl)imidazole-4-carboxamide + (6S)-5,6,7,8-tetrahydrofolate. It catalyses the reaction IMP + H2O = 5-formamido-1-(5-phospho-D-ribosyl)imidazole-4-carboxamide. Its pathway is purine metabolism; IMP biosynthesis via de novo pathway; 5-formamido-1-(5-phospho-D-ribosyl)imidazole-4-carboxamide from 5-amino-1-(5-phospho-D-ribosyl)imidazole-4-carboxamide (10-formyl THF route): step 1/1. The protein operates within purine metabolism; IMP biosynthesis via de novo pathway; IMP from 5-formamido-1-(5-phospho-D-ribosyl)imidazole-4-carboxamide: step 1/1. This chain is Bifunctional purine biosynthesis protein PurH, found in Bacillus cereus (strain ATCC 10987 / NRS 248).